Here is a 124-residue protein sequence, read N- to C-terminus: Seripauperin-19 (124 aa).

Residues 1–20 form the signal peptide; that stretch reads MVKLTSIAAGVAAIAAGVAA.

The protein belongs to the SRP1/TIP1 family. Seripauperin subfamily.

In Saccharomyces cerevisiae (strain ATCC 204508 / S288c) (Baker's yeast), this protein is Seripauperin-19 (PAU19).